Consider the following 526-residue polypeptide: Acid-sensing ion channel 1 (526 aa).

Topologically, residues 1-49 are cytoplasmic; sequence MELKTEEEEVGGVQPVSIQAFASSSTLHGLAHIFSYERLSLKRALWALC. A helical membrane pass occupies residues 50–66; it reads FLGSLAVLLCVCTERVQ. Residues 67–425 are Extracellular-facing; it reads YYFCYHHVTK…ETIEQKKAYE (359 aa). 7 disulfides stabilise this stretch: C93–C194, C172–C179, C290–C365, C308–C361, C312–C359, C321–C343, and C323–C335. N366 and N393 each carry an N-linked (GlcNAc...) asparagine glycan. The discontinuously helical transmembrane segment at 426 to 456 threads the bilayer; sequence IAGLLGDIGGQMGLFIGASILTVLELFDYAY. A GAS motif; ion selectivity filter motif is present at residues 442–444; that stretch reads GAS. At 457–526 the chain is on the cytoplasmic side; it reads EVIKHRLCRR…ARGTFEDFTC (70 aa). A phosphoserine mark is found at S477 and S497.

The protein belongs to the amiloride-sensitive sodium channel (TC 1.A.6) family. ASIC1 subfamily. Homotrimer. Heterotrimer; with other ASIC proteins producing channel with different properties. Interacts with PICK1; regulates ASIC1 clustering in membranes. Interacts with STOM; alters heterotrimeric ASIC channels activity. In terms of processing, pH-gating could be regulated by serine proteases. Post-translationally, phosphorylation by PKA regulates interaction with PICK1 and subcellular localization. Phosphorylation by PKC may regulate the channel. As to expression, expressed in dorsal root ganglia and sciatic nerve (at protein level). Widely distributed throughout the brain. Expressed in olfactory bulb, neo and allocortical regions, dentate granule cells, pyramidal cells of CA1-CA3 subfields of the hippocampal formation, habenula, basolateral amygdaloid nuclei, and in the Purkinje and granule cells of the cerebellum. Diffusely detected over most other regions of the basal ganglia, including thalamic nuclei, substantia nigra, striatum and globus pallidus, hypothalamus, midbrain, pons, medulla and choroid plexus. Expressed only in dorsal root ganglion (DRG). In terms of tissue distribution, expressed exclusively in trigeminal ganglion and dorsal root ganglion.

It localises to the cell membrane. It is found in the postsynaptic cell membrane. The protein resides in the cell projection. The protein localises to the dendrite. The catalysed reaction is Na(+)(in) = Na(+)(out). It carries out the reaction Li(+)(in) = Li(+)(out). It catalyses the reaction K(+)(in) = K(+)(out). The enzyme catalyses Ca(2+)(in) = Ca(2+)(out). The catalysed reaction is H(+)(in) = H(+)(out). Its activity is regulated as follows. Inhibited by the diuretic drug amiloride. External calcium is required to potentiate proton activation of ASIC1 at physiological concentrations, but at higher, non-physiological concentrations, it inhibits activation. Also potentiated by other multivalent cations like Mg(2+), Ba(2+). Activated by FMRFamide-related neuropeptides. Inhibited by anti-inflammatory drugs like salicylic acid. The spider venom psalmotoxin-1 specifically inhibits the ASIC1 homotrimer. The snake venom mambalgin-1, mambalgin-2 and mambalgin-3 inhibit the homotrimer of Asic1a (ASIC1 isoform 1). The snake venom mambalgin-1 and mambalgin-2 inhibit heterotrimers of Asic1a-Asic1b (ASIC1 isoform 1-ASIC1 isoform 3). Heterotrimer of Asic1a-Asic2a is inhibited by the snake venom mambalgin-1, mambalgin-2 and mambalgin-3. Heterotrimer of Asic1a-Asic2b is inhibited by the snake venom mambalgin-1 and mambalgin-2. The spider venom Pi-theraphotoxin-Hm3a inhibits the homotrimer of Asic1a (ASIC1 isoform 1). The spider venom Pi-theraphotoxin-Hm3a inhibits heterotrimers of Asic1a-Asic1b (ASIC1 isoform 1-ASIC1 isoform 3). The spider venom Pi-hexatoxin-Hi1a inhibits the ASIC1 homotrimer. Not inhibited by extracellular calcium. In terms of biological role, forms voltage-independent, pH-gated trimeric sodium channels that act as postsynaptic excitatory receptors in the nervous system, playing a crucial role in regulating synaptic plasticity, learning, and memory. Upon extracellular pH drop this channel elicits transient, fast activating, and completely desensitizing inward currents. Displays high selectivity for sodium ions but can also permit the permeation of other cations. Regulates more or less directly intracellular calcium concentration and CaMKII phosphorylation, and thereby the density of dendritic spines. Modulates neuronal activity in the circuits underlying innate fear. Functionally, permeable to other cations including calcium, lithium and potassium. PH activation and steady-state inactivation are shifted to more acidic values. Forms channels that are not permeable to calcium as it discrimates stronger between monovalent cations. Its function is as follows. Has no pH-gated sodium channel activity per se but can associate with other ASICs and regulate their pH-sensitivity. The sequence is that of Acid-sensing ion channel 1 from Rattus norvegicus (Rat).